The following is a 594-amino-acid chain: Protein HOTHEAD (594 aa).

The first 19 residues, 1-19 (MALKLFLFALLLCLPTSLS), serve as a signal peptide directing secretion. Residue 64–91 (DYIVIGGGTAGCPLAATLSQNFSVLVLE) participates in FAD binding. The active-site Proton acceptor is His-529.

Belongs to the GMC oxidoreductase family. It depends on FAD as a cofactor. In terms of tissue distribution, expressed in roots, leaves, stems, inflorescences and siliques. Found not only in epidermis but also in all sub-epidermal cell layers.

Functionally, probable FAD-dependent enzyme. Involved in regulating post-genital organ fusion. Required to limit cellular interactions between contacting epidermal cells during floral development. The polypeptide is Protein HOTHEAD (HTH) (Arabidopsis thaliana (Mouse-ear cress)).